The following is a 519-amino-acid chain: Cytochrome P450 4A11 (519 aa).

The propeptide occupies 1-4 (MSVS). A heme-binding site is contributed by Glu-321. The residue at position 440 (Ser-440) is a Phosphoserine. Cys-457 contacts heme.

Belongs to the cytochrome P450 family. It depends on heme as a cofactor. In terms of tissue distribution, expressed in liver. Expressed in S2 and S3 segments of proximal tubules in cortex and outer medulla of kidney.

The protein resides in the endoplasmic reticulum membrane. It is found in the microsome membrane. The catalysed reaction is an organic molecule + reduced [NADPH--hemoprotein reductase] + O2 = an alcohol + oxidized [NADPH--hemoprotein reductase] + H2O + H(+). It catalyses the reaction an omega-methyl-long-chain fatty acid + reduced [NADPH--hemoprotein reductase] + O2 = an omega-hydroxy-long-chain fatty acid + oxidized [NADPH--hemoprotein reductase] + H2O + H(+). It carries out the reaction dodecanoate + reduced [NADPH--hemoprotein reductase] + O2 = 12-hydroxydodecanoate + oxidized [NADPH--hemoprotein reductase] + H2O + H(+). The enzyme catalyses tetradecanoate + reduced [NADPH--hemoprotein reductase] + O2 = 14-hydroxytetradecanoate + oxidized [NADPH--hemoprotein reductase] + H2O + H(+). The catalysed reaction is hexadecanoate + reduced [NADPH--hemoprotein reductase] + O2 = 16-hydroxyhexadecanoate + oxidized [NADPH--hemoprotein reductase] + H2O + H(+). It catalyses the reaction (9Z)-octadecenoate + reduced [NADPH--hemoprotein reductase] + O2 = 18-hydroxy-(9Z)-octadecenoate + oxidized [NADPH--hemoprotein reductase] + H2O + H(+). It carries out the reaction (5Z,8Z,11Z,14Z)-eicosatetraenoate + reduced [NADPH--hemoprotein reductase] + O2 = 20-hydroxy-(5Z,8Z,11Z,14Z)-eicosatetraenoate + oxidized [NADPH--hemoprotein reductase] + H2O + H(+). The enzyme catalyses 22-hydroxydocosanoate + reduced [NADPH--hemoprotein reductase] + O2 = 22-oxodocosanoate + oxidized [NADPH--hemoprotein reductase] + 2 H2O + H(+). The catalysed reaction is 22-oxodocosanoate + reduced [NADPH--hemoprotein reductase] + O2 = docosanedioate + oxidized [NADPH--hemoprotein reductase] + H2O + 2 H(+). It catalyses the reaction (9R,10S)-epoxy-octadecanoate + reduced [NADPH--hemoprotein reductase] + O2 = 18-hydroxy-(9R,10S)-epoxy-octadecanoate + oxidized [NADPH--hemoprotein reductase] + H2O + H(+). It carries out the reaction 3-hydroxyhexadecanoate + reduced [NADPH--hemoprotein reductase] + O2 = 3,16-dihydroxyhexadecanoate + oxidized [NADPH--hemoprotein reductase] + H2O + H(+). The protein operates within lipid metabolism; arachidonate metabolism. It functions in the pathway lipid metabolism; oxylipin biosynthesis. With respect to regulation, activated by cytochrome b5. Its function is as follows. A cytochrome P450 monooxygenase involved in the metabolism of fatty acids and their oxygenated derivatives (oxylipins). Mechanistically, uses molecular oxygen inserting one oxygen atom into a substrate, and reducing the second into a water molecule, with two electrons provided by NADPH via cytochrome P450 reductase (CPR; NADPH-ferrihemoprotein reductase). Catalyzes predominantly the oxidation of the terminal carbon (omega-oxidation) of saturated and unsaturated fatty acids, the catalytic efficiency decreasing in the following order: dodecanoic &gt; tetradecanoic &gt; (9Z)-octadecenoic &gt; (9Z,12Z)-octadecadienoic &gt; hexadecanoic acid. Acts as a major omega-hydroxylase for dodecanoic (lauric) acid in liver. Participates in omega-hydroxylation of (5Z,8Z,11Z,14Z)-eicosatetraenoic acid (arachidonate) to 20-hydroxyeicosatetraenoic acid (20-HETE), a signaling molecule acting both as vasoconstrictive and natriuretic with overall effect on arterial blood pressure. Can also catalyze the oxidation of the penultimate carbon (omega-1 oxidation) of fatty acids with lower efficiency. May contribute to the degradation of saturated very long-chain fatty acids (VLCFAs) such as docosanoic acid, by catalyzing successive omega-oxidations to the corresponding dicarboxylic acid, thereby initiating chain shortening. Omega-hydroxylates (9R,10S)-epoxy-octadecanoate stereoisomer. Plays a minor role in omega-oxidation of long-chain 3-hydroxy fatty acids. Has little activity toward prostaglandins A1 and E1. The chain is Cytochrome P450 4A11 from Homo sapiens (Human).